Consider the following 887-residue polypeptide: Alanine--tRNA ligase (887 aa).

H564, H568, C676, and H680 together coordinate Zn(2+).

Belongs to the class-II aminoacyl-tRNA synthetase family. It depends on Zn(2+) as a cofactor.

The protein localises to the cytoplasm. It catalyses the reaction tRNA(Ala) + L-alanine + ATP = L-alanyl-tRNA(Ala) + AMP + diphosphate. Its function is as follows. Catalyzes the attachment of alanine to tRNA(Ala) in a two-step reaction: alanine is first activated by ATP to form Ala-AMP and then transferred to the acceptor end of tRNA(Ala). Also edits incorrectly charged Ser-tRNA(Ala) and Gly-tRNA(Ala) via its editing domain. This is Alanine--tRNA ligase from Sinorhizobium medicae (strain WSM419) (Ensifer medicae).